The sequence spans 180 residues: ATP synthase subunit delta (180 aa).

It belongs to the ATPase delta chain family. In terms of assembly, F-type ATPases have 2 components, F(1) - the catalytic core - and F(0) - the membrane proton channel. F(1) has five subunits: alpha(3), beta(3), gamma(1), delta(1), epsilon(1). F(0) has three main subunits: a(1), b(2) and c(10-14). The alpha and beta chains form an alternating ring which encloses part of the gamma chain. F(1) is attached to F(0) by a central stalk formed by the gamma and epsilon chains, while a peripheral stalk is formed by the delta and b chains.

The protein localises to the cell membrane. Its function is as follows. F(1)F(0) ATP synthase produces ATP from ADP in the presence of a proton or sodium gradient. F-type ATPases consist of two structural domains, F(1) containing the extramembraneous catalytic core and F(0) containing the membrane proton channel, linked together by a central stalk and a peripheral stalk. During catalysis, ATP synthesis in the catalytic domain of F(1) is coupled via a rotary mechanism of the central stalk subunits to proton translocation. Functionally, this protein is part of the stalk that links CF(0) to CF(1). It either transmits conformational changes from CF(0) to CF(1) or is implicated in proton conduction. The protein is ATP synthase subunit delta of Dehalococcoides mccartyi (strain ATCC BAA-2100 / JCM 16839 / KCTC 5957 / BAV1).